The primary structure comprises 406 residues: Plasma serine protease inhibitor (406 aa).

An N-terminal signal peptide occupies residues 1–19 (MQLFLLLCLVLLSPQGASL). A propeptide spans 20–25 (HRHHPR) (removed in mature form). Residue Thr39 is glycosylated (O-linked (GalNAc...) threonine). 3 N-linked (GlcNAc...) asparagine glycosylation sites follow: Asn249, Asn262, and Asn338.

It belongs to the serpin family. As to quaternary structure, forms protease inhibiting heterodimers in extracellular body fluids with serine proteases such as activated protein C/coagulation factor V/F5, acrosin/ACR, chymotrypsinogen B/CTRB1, prothrombin/F2, factor Xa/F10, factor XI/F11, kallikrein/KLKB1, tissue kallikrein, trypsin/PRSS1, prostate specific antigen/KLK3, tissue plasminogen activator/PLAT and urinary plasminogen activator/PLAU. Forms membrane-anchored serine proteases inhibiting heterodimers with TMPRSS7 and TMPRSS11E. Interacts with SEMG2. N- and O-glycosylated. N-glycosylation consists of a mixture of sialylated bi- (including sialyl-Lewis X epitopes), tri- and tetra-antennary complex-type chains; affects the maximal heparin- and thrombomodulin-enhanced rates of thrombin inhibition. O-glycosylated with core 1 or possibly core 8 glycans. Further modified with 2 sialic acid residues. Post-translationally, proteolytically cleaved. Inhibition of proteases is accompanied by formation of a stable enzyme-inhibitor complex and by degradation of the serpin to lower molecular weight derivatives. Proteolytically cleaved at the N-terminus; inhibits slightly the heparin- and thrombomodulin-enhanced rates of thrombin inhibition. Predominantly expressed in the epithelium of seminal vesicles. Expressed in the proximal tubular epithelium of the kidney. Expressed in the superficial and more differentiated epidermal keratinocytes of the skin. Expressed in megakaryocytes and platelets. Expressed poorly in kidney tumor cells compared to non tumor kidney tissues. Expressed in spermatozoa. Present in very high concentration in seminal plasma. Present in high concentration in plasma, synovial and Graaf follicle fluids. Present in low concentration in breast milk and in amniotic fluids. Present in very low concentration in urine, cerebrospinal fluids, saliva and tears (at protein level). Strongly expressed in liver. Expressed in kidney, spleen, pancreas, skeletal muscle, heart, testes, ovary, interstitial Leydig cells, epididymal glands, seminal vesicles and prostate.

It is found in the secreted. The protein resides in the extracellular space. With respect to regulation, its inhibitory activity is greatly enhanced in the presence of glycosaminoglycans, heparin, thrombomodulin and phospholipids vesicles. Heparin-dependent serine protease inhibitor acting in body fluids and secretions. Inactivates serine proteases by binding irreversibly to their serine activation site. Involved in the regulation of intravascular and extravascular proteolytic activities. Plays hemostatic roles in the blood plasma. Acts as a procoagulant and pro-inflammatory factor by inhibiting the anticoagulant activated protein C factor as well as the generation of activated protein C factor by the thrombin/thrombomodulin complex. Acts as an anticoagulant factor by inhibiting blood coagulation factors like prothrombin, factor XI, factor Xa, plasma kallikrein and fibrinolytic enzymes such as tissue- and urinary-type plasminogen activators. In seminal plasma, inactivates several serine proteases implicated in the reproductive system. Inhibits the serpin acrosin; indirectly protects component of the male genital tract from being degraded by excessive released acrosin. Inhibits tissue- and urinary-type plasminogen activator, prostate-specific antigen and kallikrein activities; has a control on the sperm motility and fertilization. Inhibits the activated protein C-catalyzed degradation of SEMG1 and SEMG2; regulates the degradation of semenogelin during the process of transfer of spermatozoa from the male reproductive tract into the female tract. In urine, inhibits urinary-type plasminogen activator and kallikrein activities. Inactivates membrane-anchored serine proteases activities such as MPRSS7 and TMPRSS11E. Inhibits urinary-type plasminogen activator-dependent tumor cell invasion and metastasis. May also play a non-inhibitory role in seminal plasma and urine as a hydrophobic hormone carrier by its binding to retinoic acid. The polypeptide is Plasma serine protease inhibitor (SERPINA5) (Homo sapiens (Human)).